The following is a 102-amino-acid chain: GQGCSYGCHPKNISISVESCGITEFILTTICEGQCYLEDPVYISHDEQKICNGDWSYEVKHIEGCPVGVTYPVARNCECTACNTGNTYCGRLPGYVPSCPSF.

5 disulfides stabilise this stretch: cysteine 8-cysteine 51, cysteine 20-cysteine 65, cysteine 31-cysteine 77, cysteine 35-cysteine 79, and cysteine 82-cysteine 89. Asparagine 12 carries N-linked (GlcNAc...) asparagine glycosylation.

Belongs to the glycoprotein hormones subunit beta family. In terms of assembly, heterodimer of an alpha and a beta chain.

It localises to the secreted. Functionally, involved in gametogenesis and steroidogenesis. The sequence is that of Gonadotropin subunit beta-1 (cgba) from Thunnus obesus (Bigeye tuna).